The following is a 357-amino-acid chain: DnaJ homolog subfamily C member 25 (357 aa).

A helical membrane pass occupies residues 19–39 (WLLLAPLLLVPLLVRPAEALV). Residues 48-121 (DCYEVLGVSR…ETRKDYDYML (74 aa)) enclose the J domain. The next 2 helical transmembrane spans lie at 147 to 167 (VVILVSVCAISVFQYFSWWNS) and 241 to 261 (LLLFQVLLAPVHLCSYIAWYC).

Belongs to the DNAJC25 family.

The protein localises to the membrane. This is DnaJ homolog subfamily C member 25 (Dnajc25) from Rattus norvegicus (Rat).